Consider the following 154-residue polypeptide: 6,7-dimethyl-8-ribityllumazine synthase (154 aa).

Residues Phe-21, 55–57, and 79–81 contribute to the 5-amino-6-(D-ribitylamino)uracil site; these read AFE and CVI. Position 84 to 85 (84 to 85) interacts with (2S)-2-hydroxy-3-oxobutyl phosphate; that stretch reads AT. Catalysis depends on His-87, which acts as the Proton donor. Residue Phe-112 coordinates 5-amino-6-(D-ribitylamino)uracil. (2S)-2-hydroxy-3-oxobutyl phosphate is bound at residue Arg-126.

Belongs to the DMRL synthase family. In terms of assembly, forms an icosahedral capsid composed of 60 subunits, arranged as a dodecamer of pentamers.

It carries out the reaction (2S)-2-hydroxy-3-oxobutyl phosphate + 5-amino-6-(D-ribitylamino)uracil = 6,7-dimethyl-8-(1-D-ribityl)lumazine + phosphate + 2 H2O + H(+). It functions in the pathway cofactor biosynthesis; riboflavin biosynthesis; riboflavin from 2-hydroxy-3-oxobutyl phosphate and 5-amino-6-(D-ribitylamino)uracil: step 1/2. Functionally, catalyzes the formation of 6,7-dimethyl-8-ribityllumazine by condensation of 5-amino-6-(D-ribitylamino)uracil with 3,4-dihydroxy-2-butanone 4-phosphate. This is the penultimate step in the biosynthesis of riboflavin. The protein is 6,7-dimethyl-8-ribityllumazine synthase of Staphylococcus aureus (strain MRSA252).